The primary structure comprises 392 residues: Protein NolC (392 aa).

Positions 2–71 (KRDLYETLGV…RAAYDRYGHA (70 aa)) constitute a J domain. Disordered regions lie at residues 103–142 (RRDDGRRSSAPLLGRSRTRCGPSLQHGDHPRGGLFRQDGA) and 157–244 (LGRE…TGLR). Positions 157–170 (LGREAGHQPEDLRH) are enriched in basic and acidic residues. Over residues 171–185 (LPGLRPYPRRPGLLL) the composition is skewed to low complexity. A compositionally biased stretch (basic and acidic residues) spans 186–203 (DRTHLPDLRRSRSDDHRS). A compositionally biased stretch (basic residues) spans 227-241 (HRGRHAYPPLRRGRT).

This chain is Protein NolC (nolC), found in Rhizobium fredii (Sinorhizobium fredii).